Consider the following 202-residue polypeptide: FMN reductase (NADH) RutF 1 (202 aa).

The interval 168–202 (PRTPRSGSAPAEPARAPRAVGARPAEGPALALRSA) is disordered. Residues 171 to 196 (PRSGSAPAEPARAPRAVGARPAEGPA) show a composition bias toward low complexity.

The protein belongs to the non-flavoprotein flavin reductase family. RutF subfamily.

The catalysed reaction is FMNH2 + NAD(+) = FMN + NADH + 2 H(+). In terms of biological role, catalyzes the reduction of FMN to FMNH2 which is used to reduce pyrimidine by RutA via the Rut pathway. This chain is FMN reductase (NADH) RutF 1, found in Methylorubrum extorquens (strain PA1) (Methylobacterium extorquens).